Consider the following 1122-residue polypeptide: Telomerase reverse transcriptase (1122 aa).

The RNA-interacting domain 1 stretch occupies residues 1-239; sequence MTRAPRCPAV…TKRHLSLTST (239 aa). The tract at residues 58–205 is GQ motif; it reads MHWGSQPPPA…RPVGRNFTNL (148 aa). Positions 137–141 are required for regulating specificity for telomeric DNA and for processivity for primer elongation; it reads WMLLL. A disordered region spans residues 213 to 296; it reads SSSRQEAPKP…KDLSSKGKVS (84 aa). The tract at residues 240–328 is linker; it reads SVPSAKKARC…PRQNAFQLRP (89 aa). Basic and acidic residues predominate over residues 284-295; the sequence is TAEKDLSSKGKV. The segment at 306-528 is required for oligomerization; it reads CKHKPSSTSL…VPAAEHRLRE (223 aa). The interval 329–540 is RNA-interacting domain 2; the sequence is FIETRHFLYS…LATFLFWLMD (212 aa). The short motif at 332 to 337 is the TFLY; involved in RNA binding element; sequence TRHFLY. Positions 381–511 are QFP motif; that stretch reads LCRTHRLSRR…MKVEDCHWLR (131 aa). The CP motif stretch occupies residues 402–422; sequence LVNHAECQYVRLLRSHCRFRT. Ser447 carries the phosphoserine; by DYRK2 modification. Residues 595 to 928 enclose the Reverse transcriptase domain; it reads EVRHHQDTWL…CLFPWCGLLL (334 aa). The residue at position 697 (Tyr697) is a Phosphotyrosine; by SRC-type Tyr-kinases. Mg(2+) is bound by residues Asp702, Asp861, and Asp862. The required for oligomerization stretch occupies residues 907–921; it reads LGGAAPYQLPAHCLF. The interval 923 to 927 is primer grip sequence; the sequence is WCGLL. A CTE region spans residues 929 to 1122; sequence DTQTLEVFCD…LSTDFQTILD (194 aa).

The protein belongs to the reverse transcriptase family. Telomerase subfamily. As to quaternary structure, catalytic component of the telomerase holoenzyme complex composed of one molecule of TERT, one molecule of WRAP53/TCAB1, two molecules of H/ACA ribonucleoprotein complex subunits DKC1, NOP10, NHP2 and GAR1, and a telomerase RNA template component (TERC). The telomerase holoenzyme complex is associated with TEP1, SMG6/EST1A and POT1. The molecular chaperone HSP90/P23 complex is required for correct assembly and stabilization of the active telomerase. Interacts directly with HSP90A and PTGES3. Interacts with HSPA1A; the interaction occurs in the absence of TERC and dissociates once the complex has formed. Interacts with RAN; the interaction promotes nuclear export of TERT. Interacts with XPO1. Interacts with PTPN11; the interaction retains TERT in the nucleus. Interacts with NCL (via RRM1 and C-terminal RRM4/Arg/Gly-rich domains); the interaction is important for nucleolar localization of TERT. Interacts with SMARCA4 (via the bromodomain); the interaction regulates Wnt-mediated signaling. Interacts with MCRS1 (isoform MCRS2); the interaction inhibits in vitro telomerase activity. Interacts with PIF1; the interaction has no effect on the elongation activity of TERT. Interacts with PML; the interaction recruits TERT to PML bodies and inhibits telomerase activity. Interacts with GNL3L. Interacts with isoform 1 and isoform 2 of NVL. Interacts with DHX36. Interacts with ATF7. In terms of processing, phosphorylation at Tyr-697 under oxidative stress leads to translocation of TERT to the cytoplasm and reduces its antiapoptotic activity. Dephosphorylated by SHP2/PTPN11 leading to nuclear retention. Phosphorylation by the AKT pathway promotes nuclear location. Phosphorylation at the G2/M phase at Ser-447 by DYRK2 promotes ubiquitination by the EDVP complex and degradation. Post-translationally, ubiquitinated by the EDVP complex, a E3 ligase complex following phosphorylation at Ser-447 by DYRK2. Ubiquitinated leads to proteasomal degradation. As to expression, high activity in intestine, liver and testis, moderate in lung, very low in muscle, heart and brain.

It is found in the nucleus. The protein localises to the nucleolus. Its subcellular location is the nucleoplasm. The protein resides in the chromosome. It localises to the telomere. It is found in the cytoplasm. The protein localises to the PML body. It carries out the reaction DNA(n) + a 2'-deoxyribonucleoside 5'-triphosphate = DNA(n+1) + diphosphate. Telomerase is a ribonucleoprotein enzyme essential for the replication of chromosome termini in most eukaryotes. Active in progenitor and cancer cells. Inactive, or very low activity, in normal somatic cells. Catalytic component of the teleromerase holoenzyme complex whose main activity is the elongation of telomeres by acting as a reverse transcriptase that adds simple sequence repeats to chromosome ends by copying a template sequence within the RNA component of the enzyme. Catalyzes the RNA-dependent extension of 3'-chromosomal termini with the 6-nucleotide telomeric repeat unit, 5'-TTAGGG-3'. The catalytic cycle involves primer binding, primer extension and release of product once the template boundary has been reached or nascent product translocation followed by further extension. More active on substrates containing 2 or 3 telomeric repeats. Telomerase activity is regulated by a number of factors including telomerase complex-associated proteins, chaperones and polypeptide modifiers. Modulates Wnt signaling. Plays important roles in aging and antiapoptosis. This Mus musculus (Mouse) protein is Telomerase reverse transcriptase (Tert).